The primary structure comprises 245 residues: Geranylgeranylglyceryl phosphate synthase (245 aa).

The Mg(2+) site is built by Asp24 and Ser54. Sn-glycerol 1-phosphate contacts are provided by residues 172 to 178 (YLEAGSG), 203 to 204 (GG), and 225 to 226 (GT).

Belongs to the GGGP/HepGP synthase family. Group II subfamily. Mg(2+) serves as cofactor.

It is found in the cytoplasm. The enzyme catalyses sn-glycerol 1-phosphate + (2E,6E,10E)-geranylgeranyl diphosphate = sn-3-O-(geranylgeranyl)glycerol 1-phosphate + diphosphate. It functions in the pathway membrane lipid metabolism; glycerophospholipid metabolism. Its function is as follows. Prenyltransferase that catalyzes the transfer of the geranylgeranyl moiety of geranylgeranyl diphosphate (GGPP) to the C3 hydroxyl of sn-glycerol-1-phosphate (G1P). This reaction is the first ether-bond-formation step in the biosynthesis of archaeal membrane lipids. The polypeptide is Geranylgeranylglyceryl phosphate synthase (Staphylothermus marinus (strain ATCC 43588 / DSM 3639 / JCM 9404 / F1)).